A 108-amino-acid polypeptide reads, in one-letter code: Tubulin-specific chaperone A (108 aa).

The residue at position 2 (alanine 2) is an N-acetylalanine.

Belongs to the TBCA family. In terms of assembly, supercomplex made of cofactors A to E. Cofactors A and D function by capturing and stabilizing tubulin in a quasi-native conformation. Cofactor E binds to the cofactor D-tubulin complex; interaction with cofactor C then causes the release of tubulin polypeptides that are committed to the native state.

The protein resides in the cytoplasm. The protein localises to the cytoskeleton. Tubulin-folding protein; involved in the early step of the tubulin folding pathway. In Homo sapiens (Human), this protein is Tubulin-specific chaperone A (TBCA).